A 210-amino-acid polypeptide reads, in one-letter code: Proteasome subunit beta (210 aa).

Positions 1–9 are cleaved as a propeptide — removed in mature form; by autocatalysis; that stretch reads MNDKNTLKG. The Nucleophile role is filled by threonine 10.

Belongs to the peptidase T1B family. The 20S proteasome core is composed of 14 alpha and 14 beta subunits that assemble into four stacked heptameric rings, resulting in a barrel-shaped structure. The two inner rings, each composed of seven catalytic beta subunits, are sandwiched by two outer rings, each composed of seven alpha subunits. The catalytic chamber with the active sites is on the inside of the barrel. Has a gated structure, the ends of the cylinder being occluded by the N-termini of the alpha-subunits. Is capped at one or both ends by the proteasome regulatory ATPase, PAN.

It localises to the cytoplasm. It catalyses the reaction Cleavage of peptide bonds with very broad specificity.. The formation of the proteasomal ATPase PAN-20S proteasome complex, via the docking of the C-termini of PAN into the intersubunit pockets in the alpha-rings, triggers opening of the gate for substrate entry. Interconversion between the open-gate and close-gate conformations leads to a dynamic regulation of the 20S proteasome proteolysis activity. Component of the proteasome core, a large protease complex with broad specificity involved in protein degradation. This Methanothermobacter thermautotrophicus (strain ATCC 29096 / DSM 1053 / JCM 10044 / NBRC 100330 / Delta H) (Methanobacterium thermoautotrophicum) protein is Proteasome subunit beta.